The chain runs to 202 residues: Small ribosomal subunit protein uS4 (202 aa).

The region spanning 91 to 168 is the S4 RNA-binding domain; sequence SRLSSILYNS…HKVPDYLEVD (78 aa).

It belongs to the universal ribosomal protein uS4 family. Part of the 30S ribosomal subunit. Contacts protein S5. The interaction surface between S4 and S5 is involved in control of translational fidelity.

In terms of biological role, one of the primary rRNA binding proteins, it binds directly to 16S rRNA where it nucleates assembly of the body of the 30S subunit. Functionally, with S5 and S12 plays an important role in translational accuracy. This Ehrlichia canis (strain Jake) protein is Small ribosomal subunit protein uS4.